The primary structure comprises 87 residues: Neurotoxin LmNaTx64.1 (87 aa).

Residues 1–18 form the signal peptide; the sequence is MKILFLIILTAFFIGVHC. Residues 19–85 enclose the LCN-type CS-alpha/beta domain; that stretch reads KHGYPIIRAG…TWSRATNKCK (67 aa). Intrachain disulfides connect C33–C84, C37–C58, C44–C65, and C48–C67. Residue C84 is modified to Cysteine amide.

The protein belongs to the long (4 C-C) scorpion toxin superfamily. Sodium channel inhibitor family. Beta subfamily. In terms of tissue distribution, expressed by the venom gland.

Its subcellular location is the secreted. Binds voltage-independently at site-4 of sodium channels (Nav) and shift the voltage of activation toward more negative potentials thereby affecting sodium channel activation and promoting spontaneous and repetitive firing. The sequence is that of Neurotoxin LmNaTx64.1 from Lychas mucronatus (Chinese swimming scorpion).